A 792-amino-acid chain; its full sequence is Probable beta-D-xylosidase 6 (792 aa).

An N-terminal signal peptide occupies residues 1-18 (MNLQLTLISLLFFTSAIA). Asn-44, Asn-104, Asn-124, and Asn-239 each carry an N-linked (GlcNAc...) asparagine glycan. Asp-309 is a catalytic residue. 2 N-linked (GlcNAc...) asparagine glycosylation sites follow: Asn-444 and Asn-618.

This sequence belongs to the glycosyl hydrolase 3 family.

The protein localises to the secreted. The protein resides in the extracellular space. It localises to the extracellular matrix. The polypeptide is Probable beta-D-xylosidase 6 (BXL6) (Arabidopsis thaliana (Mouse-ear cress)).